We begin with the raw amino-acid sequence, 41 residues long: Large ribosomal subunit protein bL36 (41 aa).

This sequence belongs to the bacterial ribosomal protein bL36 family.

The protein is Large ribosomal subunit protein bL36 of Azorhizobium caulinodans (strain ATCC 43989 / DSM 5975 / JCM 20966 / LMG 6465 / NBRC 14845 / NCIMB 13405 / ORS 571).